Reading from the N-terminus, the 118-residue chain is MKLRANRVGEQMKKELGDIISRKIKDPRVGFVTVTDVQVSGDLQIATVYISVLGDEEQKENTLKGLAKAKGFIRSEIGQRIRLRKTPEISFEFDESIGYGHRIDTLLHQINKDGKREE.

It belongs to the RbfA family. As to quaternary structure, monomer. Binds 30S ribosomal subunits, but not 50S ribosomal subunits or 70S ribosomes.

It localises to the cytoplasm. In terms of biological role, one of several proteins that assist in the late maturation steps of the functional core of the 30S ribosomal subunit. Associates with free 30S ribosomal subunits (but not with 30S subunits that are part of 70S ribosomes or polysomes). Required for efficient processing of 16S rRNA. May interact with the 5'-terminal helix region of 16S rRNA. The protein is Ribosome-binding factor A of Bacillus thuringiensis (strain Al Hakam).